Reading from the N-terminus, the 357-residue chain is Dynein axonemal assembly factor 10 (357 aa).

WD repeat units lie at residues 63–105 (EKAK…VPVY), 115–154 (NTID…DPVA), 162–205 (ENKR…LRWE), 207–249 (NIKN…PTKG), 257–297 (AHKS…QRSK), and 319–357 (LSTQ…LHKI).

Component of the PAQosome complex which is responsible for the biogenesis of several protein complexes and which consists of R2TP complex members RUVBL1, RUVBL2, RPAP3 and PIH1D1, URI complex members PFDN2, PFDN6, PDRG1, UXT and URI1 as well as ASDURF, POLR2E and DNAAF10/WDR92. Interacts with PIH1D1; the interaction associates DNAAF10 with the R2TP complex. Interacts with several dynein axonemal assembly factors.

The protein localises to the dynein axonemal particle. Functionally, key assembly factor specifically required for the stability of axonemal dynein heavy chains in cytoplasm. The protein is Dynein axonemal assembly factor 10 (DNAAF10) of Bos taurus (Bovine).